The chain runs to 1406 residues: Ubiquitin carboxyl-terminal hydrolase 6 (1406 aa).

Residues 100 to 292 form the Rab-GAP TBC domain; sequence GIPMNIRGPV…RLWDVYLVEG (193 aa). Positions 348–380 are disordered; it reads KLTRKQGDLPPPAKREQGSLAPRPVPASRGGKT. The region spanning 532-1369 is the USP domain; the sequence is TGLSNLGNTC…SAYILFYEQQ (838 aa). Cys541 (nucleophile) is an active-site residue. The tract at residues 1120-1231 is disordered; that stretch reads HKPLTPQGDE…KKNLDASKEN (112 aa). Residues 1129–1155 show a composition bias toward basic and acidic residues; sequence ELSKPRILAREVKKVDAQSSAGKEDML. Over residues 1156-1197 the composition is skewed to low complexity; that stretch reads LSKSPSSLSANISSSPKGSPSSSRKSGTSCPSSKNSSPNSSP. Residue His1328 is the Proton acceptor of the active site. Positions 1384 to 1406 are disordered; that stretch reads KMADTSSTDEDSESDYEKYSMLQ.

Belongs to the peptidase C19 family. Interacts with RAC1 and CDC42. Interacts (via Rab-GAP TBC domain) with ARF6. Interacts with calmodulin (CALM1, CALM2 and/or CALM3); the interaction is calcium-dependent. Monubiquitinated; ubiquitination is calmodulin and calcium dependent. In terms of tissue distribution, testis specific. Expressed in various cancer cell lines.

It localises to the cell membrane. It is found in the cytoplasm. The protein resides in the endosome. It carries out the reaction Thiol-dependent hydrolysis of ester, thioester, amide, peptide and isopeptide bonds formed by the C-terminal Gly of ubiquitin (a 76-residue protein attached to proteins as an intracellular targeting signal).. Deubiquitinase with an ATP-independent isopeptidase activity, cleaving at the C-terminus of the ubiquitin moiety. Catalyzes its own deubiquitination. In vitro, isoform 2, but not isoform 3, shows deubiquitinating activity. Promotes plasma membrane localization of ARF6 and selectively regulates ARF6-dependent endocytic protein trafficking. Is able to initiate tumorigenesis by inducing the production of matrix metalloproteinases following NF-kappa-B activation. May act as a GTPase-activating protein for RAB3A. The protein is Ubiquitin carboxyl-terminal hydrolase 6 (USP6) of Homo sapiens (Human).